A 364-amino-acid polypeptide reads, in one-letter code: UDP-N-acetylglucosamine--N-acetylmuramyl-(pentapeptide) pyrophosphoryl-undecaprenol N-acetylglucosamine transferase (364 aa).

UDP-N-acetyl-alpha-D-glucosamine contacts are provided by residues 16–18 (TGG), asparagine 128, arginine 166, serine 195, isoleucine 249, and glutamine 294.

This sequence belongs to the glycosyltransferase 28 family. MurG subfamily.

The protein resides in the cell inner membrane. The enzyme catalyses di-trans,octa-cis-undecaprenyl diphospho-N-acetyl-alpha-D-muramoyl-L-alanyl-D-glutamyl-meso-2,6-diaminopimeloyl-D-alanyl-D-alanine + UDP-N-acetyl-alpha-D-glucosamine = di-trans,octa-cis-undecaprenyl diphospho-[N-acetyl-alpha-D-glucosaminyl-(1-&gt;4)]-N-acetyl-alpha-D-muramoyl-L-alanyl-D-glutamyl-meso-2,6-diaminopimeloyl-D-alanyl-D-alanine + UDP + H(+). Its pathway is cell wall biogenesis; peptidoglycan biosynthesis. Cell wall formation. Catalyzes the transfer of a GlcNAc subunit on undecaprenyl-pyrophosphoryl-MurNAc-pentapeptide (lipid intermediate I) to form undecaprenyl-pyrophosphoryl-MurNAc-(pentapeptide)GlcNAc (lipid intermediate II). The polypeptide is UDP-N-acetylglucosamine--N-acetylmuramyl-(pentapeptide) pyrophosphoryl-undecaprenol N-acetylglucosamine transferase (Chromohalobacter salexigens (strain ATCC BAA-138 / DSM 3043 / CIP 106854 / NCIMB 13768 / 1H11)).